We begin with the raw amino-acid sequence, 692 residues long: Transforming growth factor beta activator LRRC33 (692 aa).

The signal sequence occupies residues 1 to 18 (MELLPLWLCLGFHFLTVG). The Extracellular portion of the chain corresponds to 19-650 (WRNRSGTATA…CKWERLDLGL (632 aa)). Asn21 carries an N-linked (GlcNAc...) asparagine glycan. One can recognise an LRRNT domain in the interval 29-56 (ASQGVCKLVGGAADCRGQSLASVPSSLP). 10 LRR repeats span residues 58–79 (HARM…SLQP), 82–103 (LLES…AFQE), 106–127 (HLRS…TAAA), 133–155 (GLRR…MLQN), 158–179 (SLRS…VFEG), 182–203 (RLRE…AFDG), 206–227 (ELRH…GLTR), 228–239 (LRVLNVSYNVLE), 251–272 (ELET…PQYS), and 273–294 (KLRT…YNTS). N-linked (GlcNAc...) asparagine glycosylation occurs at Asn74. Residue Asn155 is glycosylated (N-linked (GlcNAc...) asparagine). Asn232 carries N-linked (GlcNAc...) asparagine glycosylation. N-linked (GlcNAc...) asparagine glycosylation is found at Asn292, Asn309, and Asn312. 11 LRR repeats span residues 329–350 (DLRF…FLRK), 353–374 (SLSH…EHEP), 377–398 (ALTE…PGLA), 403–424 (SLRL…LFAN), 427–447 (NITT…PAAS), 463–484 (SLRS…PFQG), 486–507 (SLTY…APLQ), 512–534 (MLQV…DFSG), 537–558 (NLRD…GGSL), 559–580 (ALET…AVSE), and 585–594 (GLRTIYLSQN). 2 N-linked (GlcNAc...) asparagine glycosylation sites follow: Asn408 and Asn427. An N-linked (GlcNAc...) asparagine glycan is attached at Asn500. Residues 595-643 (PYDCCGVDGWGALQHGQTVADWAMVTCNLSSKIIRVTELPGGVPRDCKW) form the LRRCT domain. Residue Asn622 is glycosylated (N-linked (GlcNAc...) asparagine). Residues 651-671 (LYLVLILPSCLTLLVACTVIV) traverse the membrane as a helical segment. Over 672–692 (LTFKKPLLQVIKSRCHWSSVY) the chain is Cytoplasmic.

This sequence belongs to the LRRC32/LRRC33 family. As to quaternary structure, interacts with TGFB1; associates via disulfide bonds with the Latency-associated peptide chain (LAP) regulatory chain of TGFB1, leading to regulate activation of TGF-beta-1. Interacts (via LRR repeats) with TLR2, TLR3, TLR4, TLR9 and probably other Toll-like receptors. Interacts with CYBB/NOX2; the interaction is direct. Mainly expressed in cells of hematopoietic origin. Highly expressed in bone marrow, thymus, liver, lung, intestine and spleen. In the brain, highly expressed in microglia.

The protein localises to the cell membrane. The protein resides in the endoplasmic reticulum membrane. Its function is as follows. Key regulator of transforming growth factor beta-1 (TGFB1) specifically required for microglia function in the nervous system. Required for activation of latent TGF-beta-1 in macrophages and microglia: associates specifically via disulfide bonds with the Latency-associated peptide (LAP), which is the regulatory chain of TGFB1, and regulates integrin-dependent activation of TGF-beta-1. TGF-beta-1 activation mediated by LRRC33/NRROS is highly localized: there is little spreading of TGF-beta-1 activated from one microglial cell to neighboring microglia, suggesting the existence of localized and selective activation of TGF-beta-1 by LRRC33/NRROS. Indirectly plays a role in Toll-like receptor (TLR) signaling: ability to inhibit TLR-mediated NF-kappa-B activation and cytokine production is probably a consequence of its role in TGF-beta-1 signaling. The sequence is that of Transforming growth factor beta activator LRRC33 from Homo sapiens (Human).